We begin with the raw amino-acid sequence, 347 residues long: Haptoglobin (347 aa).

The first 18 residues, 1 to 18, serve as a signal peptide directing secretion; it reads MSALGAVIALLLWGQLFA. A Sushi domain is found at 31 to 88; sequence DGCPKPPQIAHGYVEHSVRYQCKNYYRLRTEGDGVYTLNSEKQWINKAVGDKLPECEA. 4 disulfide bridges follow: C52-C86, C90-C207, C250-C281, and C292-C322. The Peptidase S1 domain occupies 103–347; that stretch reads ILGGHLDAKG…DWVQKTIAKN (245 aa). N-linked (GlcNAc...) asparagine glycosylation is found at N125, N148, N152, and N182. The interaction with CD163 stretch occupies residues 259 to 264; the sequence is VPEKKT.

It belongs to the peptidase S1 family. In terms of assembly, tetramer of two alpha and two beta chains; disulfide-linked. The hemoglobin/haptoglobin complex is composed of a haptoglobin dimer bound to two hemoglobin alpha-beta dimers. Interacts with CD163. Interacts with ERGIC3.

It is found in the secreted. In terms of biological role, as a result of hemolysis, hemoglobin is found to accumulate in the kidney and is secreted in the urine. Haptoglobin captures, and combines with free plasma hemoglobin to allow hepatic recycling of heme iron and to prevent kidney damage. Haptoglobin also acts as an antioxidant, has antibacterial activity and plays a role in modulating many aspects of the acute phase response. Hemoglobin/haptoglobin complexes are rapidly cleared by the macrophage CD163 scavenger receptor expressed on the surface of liver Kupfer cells through an endocytic lysosomal degradation pathway. This chain is Haptoglobin (HP), found in Pongo abelii (Sumatran orangutan).